A 583-amino-acid chain; its full sequence is Radixin (583 aa).

Residues 5 to 295 form the FERM domain; that stretch reads INVRVTTMDA…GNHELYMRRR (291 aa). Residues 60-63 and Lys-278 each bind a 1,2-diacyl-sn-glycero-3-phospho-(1D-myo-inositol); that span reads KLNK. Disordered stretches follow at residues 310 to 336 and 436 to 527; these read REEKHQKQLERAQLENEKKKREIAEKE and KKKE…VKKQ. Composition is skewed to basic and acidic residues over residues 436–447 and 455–464; these read KKKEEEASEWQH and DLEKTKEELK. Pro residues predominate over residues 469-480; sequence APPPPPPPPVIP. Composition is skewed to basic and acidic residues over residues 483-492 and 506-525; these read ENEHDEHDEN and MNHRSEEERVTETQKNERVK.

It localises to the cell membrane. Its subcellular location is the cytoplasm. The protein resides in the cytoskeleton. Functionally, probably plays a crucial role in the binding of the barbed end of actin filaments to the plasma membrane. This is Radixin (RDX) from Gallus gallus (Chicken).